The primary structure comprises 282 residues: Phosphatidylserine decarboxylase proenzyme (282 aa).

Residues D88, H144, and S247 each act as charge relay system; for autoendoproteolytic cleavage activity in the active site. S247 acts as the Schiff-base intermediate with substrate; via pyruvic acid; for decarboxylase activity in catalysis. Residue S247 is modified to Pyruvic acid (Ser); by autocatalysis.

It belongs to the phosphatidylserine decarboxylase family. PSD-B subfamily. Prokaryotic type I sub-subfamily. In terms of assembly, heterodimer of a large membrane-associated beta subunit and a small pyruvoyl-containing alpha subunit. Pyruvate is required as a cofactor. Post-translationally, is synthesized initially as an inactive proenzyme. Formation of the active enzyme involves a self-maturation process in which the active site pyruvoyl group is generated from an internal serine residue via an autocatalytic post-translational modification. Two non-identical subunits are generated from the proenzyme in this reaction, and the pyruvate is formed at the N-terminus of the alpha chain, which is derived from the carboxyl end of the proenzyme. The autoendoproteolytic cleavage occurs by a canonical serine protease mechanism, in which the side chain hydroxyl group of the serine supplies its oxygen atom to form the C-terminus of the beta chain, while the remainder of the serine residue undergoes an oxidative deamination to produce ammonia and the pyruvoyl prosthetic group on the alpha chain. During this reaction, the Ser that is part of the protease active site of the proenzyme becomes the pyruvoyl prosthetic group, which constitutes an essential element of the active site of the mature decarboxylase.

The protein localises to the cell membrane. The enzyme catalyses a 1,2-diacyl-sn-glycero-3-phospho-L-serine + H(+) = a 1,2-diacyl-sn-glycero-3-phosphoethanolamine + CO2. The protein operates within phospholipid metabolism; phosphatidylethanolamine biosynthesis; phosphatidylethanolamine from CDP-diacylglycerol: step 2/2. In terms of biological role, catalyzes the formation of phosphatidylethanolamine (PtdEtn) from phosphatidylserine (PtdSer). This chain is Phosphatidylserine decarboxylase proenzyme, found in Xanthomonas campestris pv. campestris (strain 8004).